We begin with the raw amino-acid sequence, 635 residues long: Paraneoplastic antigen-like protein 8B (635 aa).

Disordered stretches follow at residues proline 115 to leucine 202, threonine 260 to phenylalanine 332, and alanine 492 to arginine 635. Residues serine 133–alanine 147 show a composition bias toward polar residues. Residues asparagine 156–glycine 183 are compositionally biased toward basic residues. Residues aspartate 261–alanine 273 are compositionally biased toward basic and acidic residues. Acidic residues-rich tracts occupy residues proline 302 to asparagine 329 and glycine 502 to glutamate 524. Basic residues predominate over residues arginine 531–threonine 540. Low complexity predominate over residues alanine 541 to alanine 557. Composition is skewed to basic residues over residues arginine 558 to glycine 568 and alanine 619 to arginine 635.

This sequence belongs to the PNMA family.

The sequence is that of Paraneoplastic antigen-like protein 8B from Homo sapiens (Human).